The following is a 353-amino-acid chain: Protein XRP2 (353 aa).

A disordered region spans residues 1 to 37 (MGCFFSKKAKRKRNSEEEQPQQDGEEPKQYSWDKREK). Gly-2 carries N-myristoyl glycine lipidation. A lipid anchor (S-palmitoyl cysteine) is attached at Cys-3. Positions 25–37 (EEPKQYSWDKREK) are enriched in basic and acidic residues. Positions 27 to 182 (PKQYSWDKRE…TWSNIHDFTP (156 aa)) constitute a C-CAP/cofactor C-like domain. Residues 101–102 (GS) and 118–121 (QQFR) each bind GTP.

It belongs to the TBCC family. In terms of processing, myristoylated on Gly-2; which may be required for membrane targeting. Palmitoylated on Cys-3; which may be required for plasma membrane targeting.

It localises to the cell membrane. Functionally, acts as a GTPase-activating protein (GAP) for tubulin in concert with tubulin-specific chaperone C, but does not enhance tubulin heterodimerization. Acts as a GTPase-activating protein. May act as guanine nucleotide dissociation inhibitor towards ADP-ribosylation factor-like proteins. This Xenopus laevis (African clawed frog) protein is Protein XRP2 (rp2).